The following is a 295-amino-acid chain: 4-diphosphocytidyl-2-C-methyl-D-erythritol kinase (295 aa).

The active site involves Lys15. Residue 102–112 (PIASGVGGGSS) participates in ATP binding. Asp144 is a catalytic residue.

This sequence belongs to the GHMP kinase family. IspE subfamily.

It carries out the reaction 4-CDP-2-C-methyl-D-erythritol + ATP = 4-CDP-2-C-methyl-D-erythritol 2-phosphate + ADP + H(+). Its pathway is isoprenoid biosynthesis; isopentenyl diphosphate biosynthesis via DXP pathway; isopentenyl diphosphate from 1-deoxy-D-xylulose 5-phosphate: step 3/6. In terms of biological role, catalyzes the phosphorylation of the position 2 hydroxy group of 4-diphosphocytidyl-2C-methyl-D-erythritol. This Mesorhizobium japonicum (strain LMG 29417 / CECT 9101 / MAFF 303099) (Mesorhizobium loti (strain MAFF 303099)) protein is 4-diphosphocytidyl-2-C-methyl-D-erythritol kinase.